We begin with the raw amino-acid sequence, 182 residues long: ATP synthase subunit delta (182 aa).

Belongs to the ATPase delta chain family. As to quaternary structure, F-type ATPases have 2 components, F(1) - the catalytic core - and F(0) - the membrane proton channel. F(1) has five subunits: alpha(3), beta(3), gamma(1), delta(1), epsilon(1). CF(0) has four main subunits: a(1), b(1), b'(1) and c(10-14). The alpha and beta chains form an alternating ring which encloses part of the gamma chain. F(1) is attached to F(0) by a central stalk formed by the gamma and epsilon chains, while a peripheral stalk is formed by the delta, b and b' chains.

It is found in the cellular thylakoid membrane. Functionally, f(1)F(0) ATP synthase produces ATP from ADP in the presence of a proton or sodium gradient. F-type ATPases consist of two structural domains, F(1) containing the extramembraneous catalytic core and F(0) containing the membrane proton channel, linked together by a central stalk and a peripheral stalk. During catalysis, ATP synthesis in the catalytic domain of F(1) is coupled via a rotary mechanism of the central stalk subunits to proton translocation. In terms of biological role, this protein is part of the stalk that links CF(0) to CF(1). It either transmits conformational changes from CF(0) to CF(1) or is implicated in proton conduction. This chain is ATP synthase subunit delta, found in Synechococcus sp. (strain CC9902).